A 161-amino-acid polypeptide reads, in one-letter code: Cytochrome c-type biogenesis protein CcmE (161 aa).

Residues 1–8 (MNPRRKKR) lie on the Cytoplasmic side of the membrane. Residues 9-29 (LTLAIALIGGVAAIASLLLYA) form a helical; Signal-anchor for type II membrane protein membrane-spanning segment. The Periplasmic segment spans residues 30–161 (LNSNLNLFYT…DYSQQKSAAQ (132 aa)). Residues histidine 131 and tyrosine 135 each coordinate heme. The tract at residues 138-161 (PEVAEAMGQKHEKLDYSQQKSAAQ) is disordered.

It belongs to the CcmE/CycJ family.

It localises to the cell inner membrane. Its function is as follows. Heme chaperone required for the biogenesis of c-type cytochromes. Transiently binds heme delivered by CcmC and transfers the heme to apo-cytochromes in a process facilitated by CcmF and CcmH. This Shewanella sp. (strain MR-4) protein is Cytochrome c-type biogenesis protein CcmE.